The sequence spans 437 residues: tRNA wybutosine-synthesizing protein 2 homolog (437 aa).

S-adenosyl-L-methionine contacts are provided by residues serine 208, lysine 215, glutamate 255, and 283–284; that span reads DN. The span at 331-344 shows a compositional bias: polar residues; it reads SFSGKNPQPPGSSN. The segment at 331–374 is disordered; it reads SFSGKNPQPPGSSNMEKKHWPHPQKITTDKQGNRTTGSCMGEMS.

This sequence belongs to the class I-like SAM-binding methyltransferase superfamily. TRM5/TYW2 family.

It carries out the reaction 4-demethylwyosine(37) in tRNA(Phe) + S-adenosyl-L-methionine = 4-demethyl-7-[(3S)-3-amino-3-carboxypropyl]wyosine(37) in tRNA(Phe) + S-methyl-5'-thioadenosine + H(+). It functions in the pathway tRNA modification; wybutosine-tRNA(Phe) biosynthesis. In terms of biological role, S-adenosyl-L-methionine-dependent transferase that acts as a component of the wybutosine biosynthesis pathway. Wybutosine is a hyper modified guanosine with a tricyclic base found at the 3'-position adjacent to the anticodon of eukaryotic phenylalanine tRNA. Catalyzes the transfer of the alpha-amino-alpha-carboxypropyl (acp) group from S-adenosyl-L-methionine to the C-7 position of 4-demethylwyosine (imG-14) to produce wybutosine-86. The protein is tRNA wybutosine-synthesizing protein 2 homolog (Trmt12) of Rattus norvegicus (Rat).